A 623-amino-acid polypeptide reads, in one-letter code: Chaperone protein HtpG (623 aa).

Residues 1-330 form an a; substrate-binding region; that stretch reads MIMTQEKKKF…SEDLPLNISR (330 aa). The segment at 331-546 is b; the sequence is ESLQHNSVLE…DAAMDIRMER (216 aa). The tract at residues 477 to 497 is disordered; sequence SDIDVEQTTSQSEEKNTDSKK. The segment covering 488 to 497 has biased composition (basic and acidic residues); it reads SEEKNTDSKK. Residues 547-623 are c; the sequence is FLIEQKQIAN…LNDIVQKAIL (77 aa).

This sequence belongs to the heat shock protein 90 family. Homodimer.

The protein resides in the cytoplasm. Functionally, molecular chaperone. Has ATPase activity. The chain is Chaperone protein HtpG from Rickettsia massiliae (strain Mtu5).